The following is a 667-amino-acid chain: Flavin-dependent halogenase malA (667 aa).

FAD is bound by residues His48, Glu70, Ile79, and Ser82. Lys108 is an active-site residue. Residues Arg144, Val168, Asp399, and Ile412 each contribute to the FAD site. Glu494 is a substrate binding site. Residues Cys597, Cys600, Cys613, and Cys616 each contribute to the Zn(2+) site. The flexible region stretch occupies residues 621–646 (TEPQTAVTFDPPLTAEEEALLYAAWN).

This sequence belongs to the flavin-dependent halogenase family. Zn(2+) serves as cofactor.

The enzyme catalyses (+)-premalbrancheamide + 2 FAD + 2 chloride + 4 H(+) = (+)-malbrancheamide + 2 FADH2. It carries out the reaction (+)-premalbrancheamide + FAD + chloride + 2 H(+) = (+)-malbrancheamide B + FADH2. The catalysed reaction is (+)-premalbrancheamide + FAD + chloride + 2 H(+) = (+)-isomalbrancheamide B + FADH2. It catalyses the reaction (+)-malbrancheamide B + FAD + chloride + 2 H(+) = (+)-malbrancheamide + FADH2. The enzyme catalyses (+)-isomalbrancheamide B + FAD + chloride + 2 H(+) = (+)-malbrancheamide + FADH2. It carries out the reaction (+)-premalbrancheamide + bromide + FAD + 2 H(+) = (+)-malbrancheamide C + FADH2. The catalysed reaction is (+)-premalbrancheamide + bromide + FAD + 2 H(+) = (+)-isomalbrancheamide C + FADH2. It catalyses the reaction (+)-malbrancheamide B + bromide + FAD + 2 H(+) = (+)-malbrancheamide D + FADH2. The enzyme catalyses (+)-isomalbrancheamide B + bromide + FAD + 2 H(+) = (+)-isomalbrancheamide D + FADH2. It participates in alkaloid biosynthesis. Functionally, flavin-dependent halogenase; part of the gene cluster that mediates the biosynthesis of malbrancheamide, a dichlorinated fungal indole alkaloid that belongs to a family of natural products containing a characteristic bicyclo[2.2.2]diazaoctane core. The first step of malbrancheamide biosynthesis involves coupling of L-proline and L-tryptophan by malG, a bimodular NRPS, to produce L-Pro-L-Trp aldehyde through reductive offloading. This compound undergoes spontaneous cyclization and dehydration to give a dienamine which is reverse prenylated at C-2 by malE. The other prenyltransferase present in the cluster, malB, displays modest activity, suggesting that may be a redundant gene in the pathway. Subsequently, a [4+2] Diels-Alder cyclo-addition catalyzed by the bifunctional enzyme malC forms the characteristic bicyclo[2.2.2]diazaoctane ring of premalbrancheamid. Finally, the flavin-dependent halogenase malA catalyzes the iterative dichlorination of the indole ring of premalbrancheamide to yield C-9 monochlorinated malbrancheamide B, C-8 monochlorinated isomalbrancheamide B, and dichlorinated malbrancheamide. MalA is also able to brominate premalbrancheamide at C-9 to yield malbrancheamide C, and, to a lesser extend, at C-8 to yield isomalbrancheamide C. Finally, malA can brominate C-9 monochlorinated malbrancheamide B at C-8 to yield malbrancheamide D, or C-8 monochlorinated isomalbrancheamide B at C-9 to produce isomalbrancheamide D. In Malbranchea aurantiaca, this protein is Flavin-dependent halogenase malA.